A 521-amino-acid chain; its full sequence is Protein nucleotidyltransferase YdiU (521 aa).

8 residues coordinate ATP: G109, G111, R112, K131, D143, G144, R194, and R201. D270 functions as the Proton acceptor in the catalytic mechanism. Mg(2+) is bound by residues N271 and D280. Position 280 (D280) interacts with ATP.

The protein belongs to the SELO family. Requires Mg(2+) as cofactor. Mn(2+) serves as cofactor.

It catalyses the reaction L-seryl-[protein] + ATP = 3-O-(5'-adenylyl)-L-seryl-[protein] + diphosphate. It carries out the reaction L-threonyl-[protein] + ATP = 3-O-(5'-adenylyl)-L-threonyl-[protein] + diphosphate. The catalysed reaction is L-tyrosyl-[protein] + ATP = O-(5'-adenylyl)-L-tyrosyl-[protein] + diphosphate. The enzyme catalyses L-histidyl-[protein] + UTP = N(tele)-(5'-uridylyl)-L-histidyl-[protein] + diphosphate. It catalyses the reaction L-seryl-[protein] + UTP = O-(5'-uridylyl)-L-seryl-[protein] + diphosphate. It carries out the reaction L-tyrosyl-[protein] + UTP = O-(5'-uridylyl)-L-tyrosyl-[protein] + diphosphate. Functionally, nucleotidyltransferase involved in the post-translational modification of proteins. It can catalyze the addition of adenosine monophosphate (AMP) or uridine monophosphate (UMP) to a protein, resulting in modifications known as AMPylation and UMPylation. This Burkholderia mallei (strain ATCC 23344) protein is Protein nucleotidyltransferase YdiU.